The following is a 426-amino-acid chain: Trigger factor 1 (426 aa).

Positions 163–248 constitute a PPIase FKBP-type domain; the sequence is QDTVNIDFAG…VNKLKRKEYA (86 aa).

Belongs to the FKBP-type PPIase family. Tig subfamily.

The protein resides in the cytoplasm. It catalyses the reaction [protein]-peptidylproline (omega=180) = [protein]-peptidylproline (omega=0). In terms of biological role, involved in protein export. Acts as a chaperone by maintaining the newly synthesized protein in an open conformation. Functions as a peptidyl-prolyl cis-trans isomerase. This Desulfitobacterium hafniense (strain Y51) protein is Trigger factor 1.